Consider the following 335-residue polypeptide: Partner of xrn-2 protein 1 (335 aa).

In terms of domain architecture, XRN2-binding (XTBD) spans 7–91 (VEAEKKLWES…SYVKASAAKK (85 aa)). Residues 95-119 (VKTSDLEGASDESKKVKMEKSPSPV) form a disordered region. The span at 105–114 (DESKKVKMEK) shows a compositional bias: basic and acidic residues.

As to quaternary structure, interacts (via N-terminus) with xrn-2; the interaction is direct.

It localises to the nucleus. Its subcellular location is the nucleolus. The protein localises to the nucleoplasm. In terms of biological role, plays a role in maintenance of steady-state concentration and turnover of microRNAs (miRNA) by degradation of mature miRNA in complex with the exoribonuclease xrn-2. Stabilizes and enhances the accumulation and activity of the exoribonuclease xrn-2, and thus contributes to miRNA turnover. This chain is Partner of xrn-2 protein 1, found in Caenorhabditis elegans.